The sequence spans 366 residues: MAVDLSEEIKQLDATLTGIETVLDVEGLRRRAEDLERQAADPDLWSDQDRAQAVTRRLSSTRGDIARVEGLRRRLDDIAAAADLGDEDLLAEAAADLPRLSSDIAGLEVRTLLSGEYDERDAIVQLSAGAGGVDAADWTAMLLRMYLRWAERHGYATEVFDTSEAEEAGLKSATFQVKAPYAYGTLRSEHGVHRLVRISPFDNQNRRQTSFAGVEVTPVVELSDHVDIDDKDLRIDIFRSSGPGGQGVNTTDSAVRITHLPTGIVVTCQNERSQLQNKAAAMIVLQAKLLERRRAEEAAEKQRITGGPQDVSFGSQIRNYVLHPYQMVKDLRTDTETSNTSGVLDGELDDFIDAEIRWRRSVENQA.

At Q246 the chain carries N5-methylglutamine.

The protein belongs to the prokaryotic/mitochondrial release factor family. Post-translationally, methylated by PrmC. Methylation increases the termination efficiency of RF2.

The protein localises to the cytoplasm. Peptide chain release factor 2 directs the termination of translation in response to the peptide chain termination codons UGA and UAA. The sequence is that of Peptide chain release factor 2 from Frankia casuarinae (strain DSM 45818 / CECT 9043 / HFP020203 / CcI3).